The sequence spans 920 residues: 3-hydroxy-3-methylglutaryl-coenzyme A reductase (920 aa).

Residues 12 to 32 form a helical membrane-spanning segment; it reads FCASHPWEVIVALLTITACML. Asparagine 37 carries N-linked (GlcNAc...) asparagine glycosylation. The segment at 62–85 is disordered; the sequence is GAGSGASGTIPPSSMGGSATSSRH. A compositionally biased stretch (polar residues) spans 71–82; it reads IPPSSMGGSATS. In terms of domain architecture, SSD spans 106–263; it reads DVILMTIVRC…MTFYPACLSL (158 aa). Transmembrane regions (helical) follow at residues 107–129, 136–156, 170–190, 208–228, and 237–257; these read VILMTIVRCTAVLYCYYQFCSLH, VLGIAGLFTVFSSFIFTTAII, LFFLLLVIDLSNSGRLAQLAL, LLGPAISLDTIVEVLLVGVGT, and VLCMFAVLSVLVNYVVFMTFY. N-linked (GlcNAc...) asparagine glycosylation is found at asparagine 342 and asparagine 346. Residues 364 to 384 traverse the membrane as a helical segment; sequence SADHIVISIVLIALVVKFICF. The tract at residues 385–498 is linker; it reads DNRDPLPDQL…EEIVSIVHAG (114 aa). Asparagine 443 and asparagine 475 each carry an N-linked (GlcNAc...) asparagine glycan. The interval 499–829 is catalytic; sequence GTHCPLHKIE…TCTMPSLEVG (331 aa). Active-site charge relay system residues include glutamate 586, lysine 717, and aspartate 793. N-linked (GlcNAc...) asparagine glycosylation is found at asparagine 797 and asparagine 802. Histidine 892 acts as the Proton donor in catalysis. Asparagine 896 and asparagine 910 each carry an N-linked (GlcNAc...) asparagine glycan.

The protein belongs to the HMG-CoA reductase family. Highly expressed in embryonic gonadal mesoderm, where expression is initially broad, and then becomes restricted to a segmental pattern at stage 11. Expression is then further restricted to a cluster of cells in each of parasegments 10, 11 and 12, corresponding to the developing gonadal mesoderm. Not expressed in pole cells.

It is found in the endoplasmic reticulum membrane. The enzyme catalyses (R)-mevalonate + 2 NADP(+) + CoA = (3S)-3-hydroxy-3-methylglutaryl-CoA + 2 NADPH + 2 H(+). It participates in metabolic intermediate biosynthesis; (R)-mevalonate biosynthesis; (R)-mevalonate from acetyl-CoA: step 3/3. The activity of HMG-CoA-reductase is suppressed by exogenous mevalonate. In terms of biological role, synthesis of mevalonate for the production of non-sterol isoprenoids, which are essential for growth differentiation. Provides spatial information during embryogenesis to guide migrating primordial germ cells (the pole cells) from the ectoderm to the mesoderm. Also required for association of the pole cells with the gonadal mesoderm. The protein is 3-hydroxy-3-methylglutaryl-coenzyme A reductase (Hmgcr) of Drosophila melanogaster (Fruit fly).